Consider the following 420-residue polypeptide: Gamma-glutamyl phosphate reductase (420 aa).

Belongs to the gamma-glutamyl phosphate reductase family.

Its subcellular location is the cytoplasm. The catalysed reaction is L-glutamate 5-semialdehyde + phosphate + NADP(+) = L-glutamyl 5-phosphate + NADPH + H(+). Its pathway is amino-acid biosynthesis; L-proline biosynthesis; L-glutamate 5-semialdehyde from L-glutamate: step 2/2. In terms of biological role, catalyzes the NADPH-dependent reduction of L-glutamate 5-phosphate into L-glutamate 5-semialdehyde and phosphate. The product spontaneously undergoes cyclization to form 1-pyrroline-5-carboxylate. This Streptococcus pneumoniae serotype 19F (strain G54) protein is Gamma-glutamyl phosphate reductase.